Reading from the N-terminus, the 54-residue chain is Large ribosomal subunit protein bL33 (54 aa).

It belongs to the bacterial ribosomal protein bL33 family.

The chain is Large ribosomal subunit protein bL33 from Corynebacterium efficiens (strain DSM 44549 / YS-314 / AJ 12310 / JCM 11189 / NBRC 100395).